Consider the following 222-residue polypeptide: Pectate lyase A (222 aa).

The signal sequence occupies residues 1 to 26 (MKKMLTLLLSAGLVASIFGVMPAAAA).

The protein belongs to the polysaccharide lyase 3 family. It depends on Ca(2+) as a cofactor.

The protein resides in the secreted. It carries out the reaction Eliminative cleavage of (1-&gt;4)-alpha-D-galacturonan to give oligosaccharides with 4-deoxy-alpha-D-galact-4-enuronosyl groups at their non-reducing ends.. The catalysed reaction is Eliminative cleavage of (1-&gt;4)-alpha-D-galacturonan methyl ester to give oligosaccharides with 4-deoxy-6-O-methyl-alpha-D-galact-4-enuronosyl groups at their non-reducing ends.. The protein operates within glycan metabolism; pectin degradation. In terms of biological role, catalyzes the depolymerization of both polygalacturonate and pectins with low (20-34%) and high (90%) levels of methyl esterification, with an endo mode of action. In contrast to the majority of pectate lyases, displays high activity on highly methylated pectins. Does not show xylanase and cellulase activity. This is Pectate lyase A from Paenibacillus amylolyticus.